The primary structure comprises 268 residues: Small ribosomal subunit protein uS2 (268 aa).

The protein belongs to the universal ribosomal protein uS2 family.

The protein is Small ribosomal subunit protein uS2 of Coprothermobacter proteolyticus (strain ATCC 35245 / DSM 5265 / OCM 4 / BT).